The following is a 295-amino-acid chain: Glycine--tRNA ligase alpha subunit (295 aa).

The protein belongs to the class-II aminoacyl-tRNA synthetase family. As to quaternary structure, tetramer of two alpha and two beta subunits.

It is found in the cytoplasm. The catalysed reaction is tRNA(Gly) + glycine + ATP = glycyl-tRNA(Gly) + AMP + diphosphate. In Bacillus subtilis (strain 168), this protein is Glycine--tRNA ligase alpha subunit (glyQ).